Here is a 184-residue protein sequence, read N- to C-terminus: Elongation factor P 1 (184 aa).

This sequence belongs to the elongation factor P family.

The protein localises to the cytoplasm. It participates in protein biosynthesis; polypeptide chain elongation. Its function is as follows. Involved in peptide bond synthesis. Stimulates efficient translation and peptide-bond synthesis on native or reconstituted 70S ribosomes in vitro. Probably functions indirectly by altering the affinity of the ribosome for aminoacyl-tRNA, thus increasing their reactivity as acceptors for peptidyl transferase. This is Elongation factor P 1 (efp1) from Protochlamydia amoebophila (strain UWE25).